Consider the following 436-residue polypeptide: GDP-mannose 6-dehydrogenase (436 aa).

Positions 10, 11, 30, 35, 86, and 124 each coordinate NAD(+). Glutamate 161, lysine 210, asparagine 214, histidine 217, asparagine 225, tyrosine 256, tyrosine 257, arginine 259, and glycine 265 together coordinate GDP-alpha-D-mannuronate. The active site involves cysteine 268. Position 271 (lysine 271) interacts with NAD(+). Residue lysine 324 coordinates GDP-alpha-D-mannuronate. Arginine 331 is an NAD(+) binding site.

It belongs to the UDP-glucose/GDP-mannose dehydrogenase family.

It catalyses the reaction GDP-alpha-D-mannose + 2 NAD(+) + H2O = GDP-alpha-D-mannuronate + 2 NADH + 3 H(+). Its pathway is glycan biosynthesis; alginate biosynthesis. Functionally, catalyzes the oxidation of guanosine diphospho-D-mannose (GDP-D-mannose) to GDP-D-mannuronic acid, a precursor for alginate polymerization. The alginate layer causes a mucoid phenotype and is essential for cyst formation. The polypeptide is GDP-mannose 6-dehydrogenase (algD) (Azotobacter vinelandii).